The following is a 116-amino-acid chain: Cyclin-dependent protein kinase inhibitor SMR9 (116 aa).

A compositionally biased stretch (basic residues) spans 1–22 (MASKGKKPLRRTTTRRRKRSHF). The interval 1–62 (MASKGKKPLR…PVSAESGCCT (62 aa)) is disordered. A compositionally biased stretch (low complexity) spans 35 to 56 (VTSTSSTSTSPTSTATPSPVSA).

Its function is as follows. Probable cyclin-dependent protein kinase (CDK) inhibitor that functions as a repressor of mitosis in the endoreduplication cell cycle. In Arabidopsis thaliana (Mouse-ear cress), this protein is Cyclin-dependent protein kinase inhibitor SMR9.